We begin with the raw amino-acid sequence, 191 residues long: Peptidyl-tRNA hydrolase (191 aa).

Tyr-16 provides a ligand contact to tRNA. His-21 (proton acceptor) is an active-site residue. The tRNA site is built by Phe-67, Asn-69, and Asn-115.

Belongs to the PTH family. Monomer.

The protein resides in the cytoplasm. It carries out the reaction an N-acyl-L-alpha-aminoacyl-tRNA + H2O = an N-acyl-L-amino acid + a tRNA + H(+). In terms of biological role, hydrolyzes ribosome-free peptidyl-tRNAs (with 1 or more amino acids incorporated), which drop off the ribosome during protein synthesis, or as a result of ribosome stalling. Its function is as follows. Catalyzes the release of premature peptidyl moieties from peptidyl-tRNA molecules trapped in stalled 50S ribosomal subunits, and thus maintains levels of free tRNAs and 50S ribosomes. The protein is Peptidyl-tRNA hydrolase of Ruthia magnifica subsp. Calyptogena magnifica.